Consider the following 124-residue polypeptide: UPF0299 membrane protein VP1300 (124 aa).

4 consecutive transmembrane segments (helical) span residues 9–29, 35–55, 72–92, and 95–115; these read LIQL…GITI, VSVP…TLGL, MILL…MLLA, and LPII…LAWL.

This sequence belongs to the UPF0299 family.

Its subcellular location is the cell inner membrane. The protein is UPF0299 membrane protein VP1300 of Vibrio parahaemolyticus serotype O3:K6 (strain RIMD 2210633).